The sequence spans 92 residues: Small ribosomal subunit protein uS19 (92 aa).

Belongs to the universal ribosomal protein uS19 family.

Its function is as follows. Protein S19 forms a complex with S13 that binds strongly to the 16S ribosomal RNA. The sequence is that of Small ribosomal subunit protein uS19 from Streptococcus agalactiae serotype Ia (strain ATCC 27591 / A909 / CDC SS700).